The chain runs to 525 residues: uncharacterized protein (525 aa).

A signal peptide spans 1 to 21 (MLECLSALLVLFAGGGGSVLA). At 22-448 (AVQSKTVADP…ISAASQLDKR (427 aa)) the chain is on the extracellular side. The interval 242–264 (KVSSENCSKDTDDKSGSKKERNT) is disordered. Residues 449-469 (IFIFTAITVSITTLMMLGFSY) form a helical membrane-spanning segment. The Cytoplasmic segment spans residues 470 to 525 (RSRVSFRDHSIDDSDDDNDWSDDEVEFDEEYFYSLPVSIPEKGISLDKMAQQLGVE).

The protein resides in the membrane. This is an uncharacterized protein from Saccharomyces cerevisiae (strain ATCC 204508 / S288c) (Baker's yeast).